Here is a 940-residue protein sequence, read N- to C-terminus: UvrABC system protein A (940 aa).

33-40 (GVSGSGKS) contributes to the ATP binding site. The C4-type zinc-finger motif lies at 252–279 (CPVCGFTVPELEPRLFSFNAPFGSCPDC). ABC transporter domains are found at residues 309–586 (WYGK…KKSL) and 606–935 (IDKK…QYLK). 639–646 (GVSGSGKS) is a binding site for ATP. The C4-type zinc-finger motif lies at 738–764 (CEACSGDGIIKIEMHFLPDVYVPCEVC).

It belongs to the ABC transporter superfamily. UvrA family. Forms a heterotetramer with UvrB during the search for lesions.

Its subcellular location is the cytoplasm. In terms of biological role, the UvrABC repair system catalyzes the recognition and processing of DNA lesions. UvrA is an ATPase and a DNA-binding protein. A damage recognition complex composed of 2 UvrA and 2 UvrB subunits scans DNA for abnormalities. When the presence of a lesion has been verified by UvrB, the UvrA molecules dissociate. The sequence is that of UvrABC system protein A from Lactococcus lactis subsp. lactis (strain IL1403) (Streptococcus lactis).